The following is a 459-amino-acid chain: Argininosuccinate lyase (459 aa).

It belongs to the lyase 1 family. Argininosuccinate lyase subfamily.

The protein localises to the cytoplasm. It catalyses the reaction 2-(N(omega)-L-arginino)succinate = fumarate + L-arginine. Its pathway is amino-acid biosynthesis; L-arginine biosynthesis; L-arginine from L-ornithine and carbamoyl phosphate: step 3/3. The sequence is that of Argininosuccinate lyase from Prochlorococcus marinus subsp. pastoris (strain CCMP1986 / NIES-2087 / MED4).